The following is a 439-amino-acid chain: MGKNVVVLGTQWGDEGKGKIVDLLTDQAAAVVRYQGGHNAGHTLVVGGKKTVLHLIPSGILRENVLCLIGNGVVLSPAALIKEMGILEEEGVPVKERLRISPNCPLILPNHIALDQAREKKRGNAKIGTTGRGIGPAYEDKVARRAVRVADLVRGGAALEEKLQEMLELHNFQLTQFYGVEAVKFEDVLALCNEWREVLAPLVIDVTKVLHDYRKEGKAIMFEGAQGSLLDIDHGTYPYVTSSNTTAGGVSSGSGMGPLHLDYVLGITKAYTTRVGAGPFPTELHYDAATDTGDAIGRHLGTVGHEFGASTGRQRRCGWFDAEILRRSVEVNSLSGICLTKLDVLDGLDEIKICVGYEDVDSGCAGSSDAVSFESLKPIYETMPGWSESTVGLTSIDQLPANALAYVKRIEQLIECPIDIISTGPDRAETMILRHPFSA.

Residues 13–19 (GDEGKGK) and 41–43 (GHT) contribute to the GTP site. Residue Asp14 is the Proton acceptor of the active site. Asp14 and Gly41 together coordinate Mg(2+). IMP contacts are provided by residues 14–17 (DEGK), 39–42 (NAGH), Thr130, Arg144, Gln226, Thr241, and Arg313. The active-site Proton donor is His42. 309–315 (ASTGRQR) serves as a coordination point for substrate. GTP contacts are provided by residues Arg315, 341 to 343 (KLD), and 422 to 424 (STG).

Belongs to the adenylosuccinate synthetase family. Homodimer. The cofactor is Mg(2+).

The protein localises to the cytoplasm. The catalysed reaction is IMP + L-aspartate + GTP = N(6)-(1,2-dicarboxyethyl)-AMP + GDP + phosphate + 2 H(+). Its pathway is purine metabolism; AMP biosynthesis via de novo pathway; AMP from IMP: step 1/2. Functionally, plays an important role in the de novo pathway of purine nucleotide biosynthesis. Catalyzes the first committed step in the biosynthesis of AMP from IMP. The chain is Adenylosuccinate synthetase from Acinetobacter baylyi (strain ATCC 33305 / BD413 / ADP1).